Consider the following 384-residue polypeptide: S-adenosylmethionine synthase (384 aa).

Histidine 15 is a binding site for ATP. Aspartate 17 contacts Mg(2+). Position 43 (glutamate 43) interacts with K(+). Positions 56 and 99 each coordinate L-methionine. A flexible loop region spans residues 99–109 (QSPDINQGVDR). ATP is bound by residues 164–166 (DAK), 230–231 (RF), aspartate 239, 245–246 (RK), alanine 262, and lysine 266. Aspartate 239 contributes to the L-methionine binding site. Lysine 270 is a binding site for L-methionine.

Belongs to the AdoMet synthase family. Homotetramer; dimer of dimers. Mg(2+) serves as cofactor. It depends on K(+) as a cofactor.

The protein localises to the cytoplasm. The enzyme catalyses L-methionine + ATP + H2O = S-adenosyl-L-methionine + phosphate + diphosphate. It participates in amino-acid biosynthesis; S-adenosyl-L-methionine biosynthesis; S-adenosyl-L-methionine from L-methionine: step 1/1. Its function is as follows. Catalyzes the formation of S-adenosylmethionine (AdoMet) from methionine and ATP. The overall synthetic reaction is composed of two sequential steps, AdoMet formation and the subsequent tripolyphosphate hydrolysis which occurs prior to release of AdoMet from the enzyme. This is S-adenosylmethionine synthase from Salmonella heidelberg (strain SL476).